We begin with the raw amino-acid sequence, 661 residues long: MANLPPRKVTSASKSKQDVSPLQILLQMGFRRQRALKALAATGNRSVQLASDWLLTHVSDSNIDADDPREYIFYASPTGPLLSQLLEFWDKSKSTCGWNGAHNFLPHITLVSFFKAPDDTSLNLAKAVRQVVENVGDPPKCTLKLEPYVSHNFMGLFISEEHAEYLKKIAVQYVKQVSSVSSINLEAHVKSLHITLAYHFEESSYEDLKTLVEEMQPVEHSSWELRLYSRDPRFANHQVYKVTQGYSPQASDELELVLGDYIYIEEKEFDISPDGWVHGTSWLTGLNGYLPAVYTRRTAETDAWTLLKAVSLGNNCSDCKSESGSNTDSEMAGTYPHEDAADLAYKKSEETYQEWDKYWSEVMNSRSDSILTITQGLPMNWELSKAAEEMKNNITNGTSKSRRWVFALRHGERVDLTYGPWVPHCFENDTYVRKDLNLPLKLAHRAGGKGGYVKDTPLTRLGWFQAQLVGEGMRMAGVSIKHVYASPALRCVETAQGFLDGLRADPSVKIKVEPGLFEFKNWHMPKGIDFMTPIELCKAGLNVDMTYKPYVEMDASAETMDEFFKRGEVAMQAAVNDTEKDGGNVIFIGHAITLDQMVGALHRLRDDMEDVQPYEIGRNLLKVPYCALGAMRGKPWDVVSPPCPPSINSSSGRFDWRILIK.

Positions 16 to 57 (KQDVSPLQILLQMGFRRQRALKALAATGNRSVQLASDWLLTH) constitute a UBA domain. The SH3 domain maps to 235–300 (ANHQVYKVTQ…PAVYTRRTAE (66 aa)). Arg409 is an active-site residue. Residue His410 is the Tele-phosphohistidine intermediate of the active site. The active site involves His590.

As to quaternary structure, homodimer. In terms of tissue distribution, detected in non-diapause eggs, with highest expression between 2 and 5 days after oviposition. Not detected in other tissues tested.

Its subcellular location is the cytoplasm. It is found in the cytosol. It catalyses the reaction ecdysone 22-phosphate + H2O = ecdysone + phosphate. It carries out the reaction 20-hydroxyecdysone 22-phosphate + H2O = 20-hydroxyecdysone + phosphate. The enzyme catalyses 2-deoxyecdysone 22-phosphate + H2O = 2-deoxyecdysone + phosphate. The catalysed reaction is O-phospho-L-tyrosyl-[protein] + H2O = L-tyrosyl-[protein] + phosphate. Competitively inhibited by 4-nitrophenyl phosphate (para-nitrophenylphosphate, pNPP). Also inhibited by tungstate, vanadate, and phosphate. In terms of biological role, steroid phosphatase which catalyzes the conversion of inactive phosphorylated ecdysteroids into their active forms. Shows high activity towards ecdysone 22-phosphate (E22P). Has lower activity towards other ecdysteriod phosphates including 20-hydroxyecdysone 22-phosphate (20E22P) and 2-deoxyecdysone 22-phosphate (2dE22P). Also has protein tyrosine phosphatase activity. The sequence is that of Ecdysteroid-phosphate phosphatase from Bombyx mori (Silk moth).